The sequence spans 332 residues: L-lactate dehydrogenase A chain (332 aa).

NAD(+) is bound by residues 29 to 57 and Arg-99; that span reads GMVG…MEDK. The substrate site is built by Arg-106, Asn-138, and Arg-169. Asn-138 is a binding site for NAD(+). His-193 serves as the catalytic Proton acceptor. Residue Thr-248 coordinates substrate.

This sequence belongs to the LDH/MDH superfamily. LDH family. Homotetramer.

The protein localises to the cytoplasm. It carries out the reaction (S)-lactate + NAD(+) = pyruvate + NADH + H(+). The protein operates within fermentation; pyruvate fermentation to lactate; (S)-lactate from pyruvate: step 1/1. In terms of biological role, interconverts simultaneously and stereospecifically pyruvate and lactate with concomitant interconversion of NADH and NAD(+). The polypeptide is L-lactate dehydrogenase A chain (ldha) (Sphyraena lucasana (Lucas barracuda)).